Reading from the N-terminus, the 262-residue chain is MARGPKKHLKRLNAPKSWMLGKLGGVYAPRPSTGPHKLRECLPLLIFLRNRLKYALTNCEVTKITMQRLIKVDGKVRTDSNYPLGFMDVVTIEKTGEFFRLIYDVKGRFSIHRISNEEAKYKLCKVRRVQTGPKGVPFLVTHDGRTLRYPDPVIKVNDTIQLEIATNKILDSIKFDSGNLCMITGGRNLGRVGTVVSRERHPGSFDICHIKDSQGHTFATRMNNVFIIGKGSKAYVSLPRGKGVKLSIAEERDKRLAAKGAN.

The S4 RNA-binding domain occupies 42–104 (LPLLIFLRNR…TGEFFRLIYD (63 aa)).

The protein belongs to the eukaryotic ribosomal protein eS4 family.

The chain is Small ribosomal subunit protein eS4 (RpS4) from Lysiphlebus testaceipes (Greenbugs aphid parastoid).